The chain runs to 448 residues: N-succinylarginine dihydrolase (448 aa).

Substrate-binding positions include 19–28 (AGLSSGNIAS), Asn110, and 137–138 (HR). Residue Glu174 is part of the active site. Residue Arg216 coordinates substrate. His252 is a catalytic residue. Substrate-binding residues include Asp254 and Asn366. Cys372 acts as the Nucleophile in catalysis.

The protein belongs to the succinylarginine dihydrolase family. In terms of assembly, homodimer.

It catalyses the reaction N(2)-succinyl-L-arginine + 2 H2O + 2 H(+) = N(2)-succinyl-L-ornithine + 2 NH4(+) + CO2. Its pathway is amino-acid degradation; L-arginine degradation via AST pathway; L-glutamate and succinate from L-arginine: step 2/5. Its function is as follows. Catalyzes the hydrolysis of N(2)-succinylarginine into N(2)-succinylornithine, ammonia and CO(2). The polypeptide is N-succinylarginine dihydrolase (Legionella pneumophila (strain Lens)).